A 155-amino-acid chain; its full sequence is Putative pre-16S rRNA nuclease (155 aa).

This sequence belongs to the YqgF nuclease family.

It is found in the cytoplasm. In terms of biological role, could be a nuclease involved in processing of the 5'-end of pre-16S rRNA. The sequence is that of Putative pre-16S rRNA nuclease from Wolbachia pipientis wMel.